A 343-amino-acid chain; its full sequence is Phosphate acyltransferase (343 aa).

Belongs to the PlsX family. In terms of assembly, homodimer. Probably interacts with PlsY.

The protein localises to the cytoplasm. It carries out the reaction a fatty acyl-[ACP] + phosphate = an acyl phosphate + holo-[ACP]. It functions in the pathway lipid metabolism; phospholipid metabolism. Its function is as follows. Catalyzes the reversible formation of acyl-phosphate (acyl-PO(4)) from acyl-[acyl-carrier-protein] (acyl-ACP). This enzyme utilizes acyl-ACP as fatty acyl donor, but not acyl-CoA. This chain is Phosphate acyltransferase, found in Haemophilus ducreyi (strain 35000HP / ATCC 700724).